The sequence spans 131 residues: MEKDMAMMGDKLILRGLKFYGFHGAIPEEKTLGQMFMLDIDAWMCLKKAGLSDNLADSVSYVDIYNVAKEVVEGSSRNLLERVAGLIASKTLEISPRITAVRVKLWKPNVALIQSTIDYLGVEIFRDRATE.

Substrate-binding positions include Glu29, Tyr61, and 80-81 (LE). The active-site Proton donor/acceptor is Lys107.

It belongs to the DHNA family. In terms of assembly, homooctamer. Forms a hollow cylinder assembled from two ring-shaped tetramers. Expressed in roots, leaves, stems and siliques.

It carries out the reaction 7,8-dihydroneopterin = 6-hydroxymethyl-7,8-dihydropterin + glycolaldehyde. Its pathway is cofactor biosynthesis; tetrahydrofolate biosynthesis; 2-amino-4-hydroxy-6-hydroxymethyl-7,8-dihydropteridine diphosphate from 7,8-dihydroneopterin triphosphate: step 3/4. Its function is as follows. Catalyzes the conversion of 7,8-dihydroneopterin into 6-hydroxymethyl-7,8-dihydropterin, a biosynthetic precursor of the vitamin tetrahydrofolate. Can use L-threo-dihydroneopterin and D-erythro-dihydroneopterin as substrates for the formation of 6-hydroxymethyldihydropterin, but it can also catalyze the epimerization of carbon 2' of dihydroneopterin and dihydromonapterin. The protein is Dihydroneopterin aldolase 2 of Arabidopsis thaliana (Mouse-ear cress).